Here is an 859-residue protein sequence, read N- to C-terminus: Leucine--tRNA ligase (859 aa).

A 'HIGH' region motif is present at residues 43-53 (PYPSGRIHMGH). The short motif at 614 to 618 (KMSKS) is the 'KMSKS' region element. K617 lines the ATP pocket.

It belongs to the class-I aminoacyl-tRNA synthetase family.

It localises to the cytoplasm. The catalysed reaction is tRNA(Leu) + L-leucine + ATP = L-leucyl-tRNA(Leu) + AMP + diphosphate. The chain is Leucine--tRNA ligase from Magnetococcus marinus (strain ATCC BAA-1437 / JCM 17883 / MC-1).